The primary structure comprises 362 residues: MIGQLEHLARRGLFLFDPEAAHGLSIKALKSGLVPSCAAPADPRLGQTVAGLVFSNPIGMAAGYDKNAEVPEALLKIGFGFTEIGTVTPRPQAGNDKPRLFRLVEDEAVINRLGFNNEGHGAALARLKACSREALIGVNIGANKDSADRIADYVTGIRTFYAVARYFTANISSPNTPGLRDLQARESLSALLSAVLAARDDEARKGGRQVPVFLKIAPDLTEEGMDDIAAEVLAHGLDGLIVSNTTLSREGLKDRRQANEAGGLSGKPLFEKSTAVLARMRKRVGPHLPIIGVGGVCSAETAAEKIRAGADLVQLYSCMIYEGPGLPGRIVRGLSALCEREKLASIRDIRDSRLDYWSGRNV.

Residues 62–66 (AGYDK) and T86 contribute to the FMN site. Position 66 (K66) interacts with substrate. 111–115 (NRLGF) provides a ligand contact to substrate. FMN is bound by residues N139 and N170. Substrate is bound at residue N170. The active-site Nucleophile is the S173. N175 contributes to the substrate binding site. FMN contacts are provided by K215 and S243. Position 244–245 (244–245 (NT)) interacts with substrate. Residues G266, G295, and 316-317 (YS) each bind FMN.

The protein belongs to the dihydroorotate dehydrogenase family. Type 2 subfamily. As to quaternary structure, monomer. FMN is required as a cofactor.

The protein resides in the cell membrane. The enzyme catalyses (S)-dihydroorotate + a quinone = orotate + a quinol. It functions in the pathway pyrimidine metabolism; UMP biosynthesis via de novo pathway; orotate from (S)-dihydroorotate (quinone route): step 1/1. Functionally, catalyzes the conversion of dihydroorotate to orotate with quinone as electron acceptor. The sequence is that of Dihydroorotate dehydrogenase (quinone) from Rhizobium meliloti (strain 1021) (Ensifer meliloti).